A 278-amino-acid chain; its full sequence is 4-deoxy-L-threo-5-hexosulose-uronate ketol-isomerase (278 aa).

Residues H196, H198, E203, and H245 each coordinate Zn(2+).

It belongs to the KduI family. Requires Zn(2+) as cofactor.

It catalyses the reaction 5-dehydro-4-deoxy-D-glucuronate = 3-deoxy-D-glycero-2,5-hexodiulosonate. The protein operates within glycan metabolism; pectin degradation; 2-dehydro-3-deoxy-D-gluconate from pectin: step 4/5. Functionally, catalyzes the isomerization of 5-dehydro-4-deoxy-D-glucuronate to 3-deoxy-D-glycero-2,5-hexodiulosonate. In Salmonella typhimurium (strain LT2 / SGSC1412 / ATCC 700720), this protein is 4-deoxy-L-threo-5-hexosulose-uronate ketol-isomerase.